Here is a 356-residue protein sequence, read N- to C-terminus: Vesicular integral-membrane protein VIP36 (356 aa).

Residues 1-44 (MAAEGWIWRWGWGRRCLGRPGLLGPGPGPTTPLFLLLLLGSVTA) form the signal peptide. Residues 45–322 (DITDGNSEHL…FRSGPLTGWR (278 aa)) lie on the Lumenal side of the membrane. The L-type lectin-like domain maps to 52 to 276 (EHLKREHSLI…DIISMKLFQL (225 aa)). Residues Ser96 and Asp131 each contribute to the a carbohydrate site. Asp162, Tyr164, and Asn166 together coordinate Ca(2+). 164–166 (YPN) provides a ligand contact to a carbohydrate. The N-linked (GlcNAc...) asparagine glycan is linked to Asn183. Position 190 (His190) interacts with a carbohydrate. Asp193 provides a ligand contact to Ca(2+). Cys202 and Cys239 form a disulfide bridge. A carbohydrate is bound at residue 260 to 262 (GDL). The helical transmembrane segment at 323–345 (VFLLLLCALLGIVVCAVVGAVVF) threads the bilayer. Residues 346-356 (QKRQERNKRFY) lie on the Cytoplasmic side of the membrane.

It depends on Ca(2+) as a cofactor. Ubiquitous.

The protein resides in the endoplasmic reticulum-Golgi intermediate compartment membrane. It is found in the golgi apparatus membrane. The protein localises to the endoplasmic reticulum membrane. Functionally, plays a role as an intracellular lectin in the early secretory pathway. Interacts with N-acetyl-D-galactosamine and high-mannose type glycans and may also bind to O-linked glycans. Involved in the transport and sorting of glycoproteins carrying high mannose-type glycans. The protein is Vesicular integral-membrane protein VIP36 (LMAN2) of Homo sapiens (Human).